The primary structure comprises 185 residues: Elongation factor P (185 aa).

It belongs to the elongation factor P family.

It is found in the cytoplasm. The protein operates within protein biosynthesis; polypeptide chain elongation. Involved in peptide bond synthesis. Stimulates efficient translation and peptide-bond synthesis on native or reconstituted 70S ribosomes in vitro. Probably functions indirectly by altering the affinity of the ribosome for aminoacyl-tRNA, thus increasing their reactivity as acceptors for peptidyl transferase. The protein is Elongation factor P of Syntrophomonas wolfei subsp. wolfei (strain DSM 2245B / Goettingen).